We begin with the raw amino-acid sequence, 190 residues long: Glutathione peroxidase 2 (190 aa).

Selenocysteine 40 is an active-site residue. A non-standard amino acid (selenocysteine) is located at residue selenocysteine 40.

Belongs to the glutathione peroxidase family. As to quaternary structure, homotetramer.

The protein localises to the cytoplasm. The protein resides in the cytosol. It catalyses the reaction 2 glutathione + H2O2 = glutathione disulfide + 2 H2O. The enzyme catalyses a hydroperoxy polyunsaturated fatty acid + 2 glutathione = a hydroxy polyunsaturated fatty acid + glutathione disulfide + H2O. The catalysed reaction is tert-butyl hydroperoxide + 2 glutathione = tert-butanol + glutathione disulfide + H2O. It carries out the reaction cumene hydroperoxide + 2 glutathione = 2-phenylpropan-2-ol + glutathione disulfide + H2O. It catalyses the reaction (13S)-hydroperoxy-(9Z,11E)-octadecadienoate + 2 glutathione = (13S)-hydroxy-(9Z,11E)-octadecadienoate + glutathione disulfide + H2O. The enzyme catalyses (5S)-hydroperoxy-(6E,8Z,11Z,14Z)-eicosatetraenoate + 2 glutathione = (5S)-hydroxy-(6E,8Z,11Z,14Z)-eicosatetraenoate + glutathione disulfide + H2O. The catalysed reaction is (12R)-hydroperoxy-(5Z,8Z,10E,14Z)-eicosatetraenoate + 2 glutathione = (12R)-hydroxy-(5Z,8Z,10E,14Z)-eicosatetraenoate + glutathione disulfide + H2O. It carries out the reaction (15S)-hydroperoxy-(5Z,8Z,11Z,13E)-eicosatetraenoate + 2 glutathione = (15S)-hydroxy-(5Z,8Z,11Z,13E)-eicosatetraenoate + glutathione disulfide + H2O. Catalyzes the reduction of hydroperoxides in a glutathione-dependent manner thus regulating cellular redox homeostasis. Can reduce small soluble hydroperoxides such as H2O2, cumene hydroperoxide and tert-butyl hydroperoxide, as well as several fatty acid-derived hydroperoxides. Cannot reduce phosphatidycholine hydroperoxide. This chain is Glutathione peroxidase 2 (Gpx2), found in Mus musculus (Mouse).